A 405-amino-acid chain; its full sequence is Type II secretion system protein F (405 aa).

Over 1–169 (MPLYRYKALD…SRALKGKVIN (169 aa)) the chain is Cytoplasmic. Asp-98, Gln-151, and Asp-155 together coordinate Ca(2+). Residues 170 to 190 (ALIYPAILLAVVGCALLFLLG) traverse the membrane as a helical segment. At 191–218 (YVVPQFAQMYESLDVALPWFTQAVLSVG) the chain is on the periplasmic side. A helical transmembrane segment spans residues 219 to 239 (LLVRDWWLVLVVIPGVLGLWL). Topologically, residues 240–370 (DRKRRNAAFR…LETAQAIDRA (131 aa)) are cytoplasmic. A helical transmembrane segment spans residues 371–391 (LAALVPLITLVLASVVGLVII). Residues 392-405 (SVLVPLYDLTNAIG) are Periplasmic-facing.

It belongs to the GSP F family. In terms of assembly, type II secretion system is composed of four main components: the outer membrane complex, the inner membrane complex, the cytoplasmic secretion ATPase and the periplasm-spanning pseudopilus. Homodimer. Interacts with XpsE and XpsL components.

The protein resides in the cell inner membrane. Its function is as follows. Component of the type II secretion system inner membrane complex required for the energy-dependent secretion of extracellular factors such as proteases and toxins from the periplasm. This is Type II secretion system protein F (xpsF) from Xanthomonas campestris pv. campestris (strain ATCC 33913 / DSM 3586 / NCPPB 528 / LMG 568 / P 25).